The following is a 318-amino-acid chain: MKHAENEYLNLCRHVMEHGTKKEDRTGTGTVSVFGYQMRFDLSKGFPLLTTKRVPFRLVASELLWFMKGDTNIRYLLQHNNNIWNEWAFKSWVESDEYTGPDMTDFGLRSQQDEEFKVQYDKQMELFKKNVLEDDDFSNKYGYLGDVYGKQWRAWKTTAGETLDQLKDVIEMIKKTPDSRRLIVSAWNPEDVPSMALPPCHTLFQFYVADGKLSCQLYQRSGDIFLGIPFNIASYSLLTHLIAHECGLEVGEFVHTIGDAHIYTNHFEQVEKQLAREPRPFPKLTLNPDVKSVFDFEMEDLTIEGYDPHPAIKAPVAV.

DUMP-binding positions include Arg25 and 180–181 (RR). Residue Cys200 is the Nucleophile of the active site. Residues 220–223 (RSGD), Asn231, and 261–263 (HIY) each bind dUMP. Residue Asp223 participates in (6R)-5,10-methylene-5,6,7,8-tetrahydrofolate binding. Ala317 is a (6R)-5,10-methylene-5,6,7,8-tetrahydrofolate binding site.

Belongs to the thymidylate synthase family. Bacterial-type ThyA subfamily. As to quaternary structure, homodimer.

The protein localises to the cytoplasm. The enzyme catalyses dUMP + (6R)-5,10-methylene-5,6,7,8-tetrahydrofolate = 7,8-dihydrofolate + dTMP. Its pathway is pyrimidine metabolism; dTTP biosynthesis. In terms of biological role, catalyzes the reductive methylation of 2'-deoxyuridine-5'-monophosphate (dUMP) to 2'-deoxythymidine-5'-monophosphate (dTMP) while utilizing 5,10-methylenetetrahydrofolate (mTHF) as the methyl donor and reductant in the reaction, yielding dihydrofolate (DHF) as a by-product. This enzymatic reaction provides an intracellular de novo source of dTMP, an essential precursor for DNA biosynthesis. The polypeptide is Thymidylate synthase (Bacillus cereus (strain ZK / E33L)).